Consider the following 394-residue polypeptide: Mannosyl-3-phosphoglycerate synthase (394 aa).

The protein belongs to the glycosyltransferase 2 family.

Its subcellular location is the cytoplasm. The enzyme catalyses (2R)-3-phosphoglycerate + GDP-alpha-D-mannose = 2-O-(alpha-D-mannosyl)-3-phosphoglycerate + GDP + H(+). It functions in the pathway carbohydrate biosynthesis; 2-(alpha-D-mannosyl)-D-glycerate biosynthesis; 2-(alpha-D-mannosyl)-D-glycerate from GDP-alpha-D-mannose (MPG route): step 1/2. Functionally, transfers a mannosyl group from GDP-mannose to phosphoglycerate to form mannosyl-3-phosphoglycerate (MPG). The protein is Mannosyl-3-phosphoglycerate synthase (mngA) of Pyrococcus furiosus (strain ATCC 43587 / DSM 3638 / JCM 8422 / Vc1).